A 314-amino-acid polypeptide reads, in one-letter code: Annexin-like protein RJ4 (314 aa).

4 Annexin repeats span residues 10-81 (FCAK…RWTL), 82-153 (DPAD…ALVT), 165-236 (KLAN…TAIR), and 240-311 (DPKK…TLLG). Ca(2+) is bound by residues Gly25, Gly27, and Glu67. Residues Ile253, Arg255, Gly257, Asp297, and Thr298 each coordinate Ca(2+).

It belongs to the annexin (TC 1.A.31.1) family. Predominantly in developing fruit.

This is Annexin-like protein RJ4 from Fragaria ananassa (Strawberry).